Reading from the N-terminus, the 173-residue chain is 3-isopropylmalate dehydratase small subunit (173 aa).

This sequence belongs to the LeuD family. LeuD type 2 subfamily. Heterodimer of LeuC and LeuD.

The enzyme catalyses (2R,3S)-3-isopropylmalate = (2S)-2-isopropylmalate. It functions in the pathway amino-acid biosynthesis; L-leucine biosynthesis; L-leucine from 3-methyl-2-oxobutanoate: step 2/4. Its function is as follows. Catalyzes the isomerization between 2-isopropylmalate and 3-isopropylmalate, via the formation of 2-isopropylmaleate. This chain is 3-isopropylmalate dehydratase small subunit, found in Caldicellulosiruptor saccharolyticus (strain ATCC 43494 / DSM 8903 / Tp8T 6331).